Consider the following 426-residue polypeptide: Actin-like protein 6B (426 aa).

Positions 39–82 (TTVGLLAAEEGGGLELEGDKEKKGKIFHIDTNALHVPRDGAEVM) are essential for mediating its function in dendritic development; may contribute to neuronal-specific targeting.

Belongs to the actin family. In terms of assembly, component of the multiprotein chromatin-remodeling complexes SWI/SNF: SWI/SNF-A (BAF), SWI/SNF-B (PBAF) and related complexes. The canonical complex contains a catalytic subunit (either SMARCA4/BRG1/BAF190A or SMARCA2/BRM/BAF190B) and at least SMARCE1, ACTL6A/BAF53, SMARCC1/BAF155, SMARCC2/BAF170 and SMARCB1/SNF5/BAF47. Other subunits specific to each of the complexes may also be present permitting several possible combinations developmentally and tissue specific. Component of the BAF complex, which includes at least actin (ACTB), ARID1A/BAF250A, ARID1B/BAF250B, SMARCA2/BRM, SMARCA4/BRG1/BAF190A, ACTL6A/BAF53, ACTL6B/BAF53B, SMARCE1/BAF57, SMARCC1/BAF155, SMARCC2/BAF170, SMARCB1/SNF5/INI1 and one or more SMARCD1/BAF60A, SMARCD2/BAF60B, or SMARCD3/BAF60C. Component of neuron-specific chromatin remodeling complex (nBAF complex) composed of at least, ARID1A/BAF250A or ARID1B/BAF250B, SMARCD1/BAF60A or SMARCD2/BAF60B or SMARCD3/BAF60C, SMARCA2/BRM/BAF190B, SMARCA4/BRG1/BAF190A, SMARCB1/BAF47, SMARCC1/BAF155, SMARCE1/BAF57, SMARCC2/BAF170, DPF1/BAF45B, DPF3/BAF45C, ACTL6B/BAF53B and actin (ACTB). Note that the nBAF complex is polymorphic in regard to the ATPase, SMARCA2 and SMARCA4 occupying mutually exclusive positions. May be a component of the SWI/SNF-B (PBAF) chromatin remodeling complex, at least composed of SMARCA4/BRG1, SMARCB1/BAF47/SNF5, ACTL6A/BAF53A or ACTL6B/BAF53B, SMARCE1/BAF57, SMARCD1/BAF60A, SMARCD2/BAF60B, perhaps SMARCD3/BAF60C, SMARCC1/BAF155, SMARCC2/BAF170, PBRM1/BAF180, ARID2/BAF200 and actin.

It is found in the nucleus. Involved in transcriptional activation and repression of select genes by chromatin remodeling (alteration of DNA-nucleosome topology). Component of SWI/SNF chromatin remodeling complexes that carry out key enzymatic activities, changing chromatin structure by altering DNA-histone contacts within a nucleosome in an ATP-dependent manner. Belongs to the neuron-specific chromatin remodeling complex (nBAF complex), as such plays a role in remodeling mononucleosomes in an ATP-dependent fashion, and is required for postmitotic neural development and dendritic outgrowth. During neural development a switch from a stem/progenitor to a postmitotic chromatin remodeling mechanism occurs as neurons exit the cell cycle and become committed to their adult state. The transition from proliferating neural stem/progenitor cells to postmitotic neurons requires a switch in subunit composition of the npBAF and nBAF complexes. As neural progenitors exit mitosis and differentiate into neurons, npBAF complexes which contain ACTL6A/BAF53A and PHF10/BAF45A, are exchanged for homologous alternative ACTL6B/BAF53B and DPF1/BAF45B or DPF3/BAF45C subunits in neuron-specific complexes (nBAF). The npBAF complex is essential for the self-renewal/proliferative capacity of the multipotent neural stem cells. The nBAF complex along with CREST plays a role regulating the activity of genes essential for dendrite growth. ACTL6B/BAF53B is not essential for assembly of the nBAF complex but is required for targeting the complex and CREST to the promoter of genes essential for dendritic growth. Essential for neuronal maturation and dendrite development. This chain is Actin-like protein 6B, found in Homo sapiens (Human).